A 600-amino-acid polypeptide reads, in one-letter code: Elongation factor 4 (600 aa).

The tr-type G domain occupies 4–186 (SKIRNFSIIA…AIVEKIPSPS (183 aa)). Residues 16 to 21 (DHGKST) and 133 to 136 (NKID) contribute to the GTP site.

It belongs to the TRAFAC class translation factor GTPase superfamily. Classic translation factor GTPase family. LepA subfamily.

Its subcellular location is the cell membrane. The catalysed reaction is GTP + H2O = GDP + phosphate + H(+). Its function is as follows. Required for accurate and efficient protein synthesis under certain stress conditions. May act as a fidelity factor of the translation reaction, by catalyzing a one-codon backward translocation of tRNAs on improperly translocated ribosomes. Back-translocation proceeds from a post-translocation (POST) complex to a pre-translocation (PRE) complex, thus giving elongation factor G a second chance to translocate the tRNAs correctly. Binds to ribosomes in a GTP-dependent manner. The chain is Elongation factor 4 from Mycoplasma mycoides subsp. mycoides SC (strain CCUG 32753 / NCTC 10114 / PG1).